Reading from the N-terminus, the 175-residue chain is NADH-ubiquinone oxidoreductase chain 6 (175 aa).

5 helical membrane passes run 1 to 21, 25 to 45, 47 to 67, 88 to 108, and 149 to 169; these read MMMYIVFILSIIFVISFVGVS, SPIYGGLGLIVGGGVGCGVIL, FGGSFLGLMVFLIYLGGMLVV, VVLGAFVLGLVVEFLIVIYAL, and YGVWLVIVTGWSLFISVVIIM.

This sequence belongs to the complex I subunit 6 family. As to quaternary structure, core subunit of respiratory chain NADH dehydrogenase (Complex I) which is composed of 45 different subunits.

It localises to the mitochondrion inner membrane. The catalysed reaction is a ubiquinone + NADH + 5 H(+)(in) = a ubiquinol + NAD(+) + 4 H(+)(out). Its function is as follows. Core subunit of the mitochondrial membrane respiratory chain NADH dehydrogenase (Complex I) which catalyzes electron transfer from NADH through the respiratory chain, using ubiquinone as an electron acceptor. Essential for the catalytic activity and assembly of complex I. The protein is NADH-ubiquinone oxidoreductase chain 6 (MT-ND6) of Balaenoptera physalus (Fin whale).